Reading from the N-terminus, the 864-residue chain is Leucine--tRNA ligase (864 aa).

The 'HIGH' region motif lies at proline 42–histidine 52. Positions lysine 624–serine 628 match the 'KMSKS' region motif. Lysine 627 is an ATP binding site.

This sequence belongs to the class-I aminoacyl-tRNA synthetase family.

Its subcellular location is the cytoplasm. It catalyses the reaction tRNA(Leu) + L-leucine + ATP = L-leucyl-tRNA(Leu) + AMP + diphosphate. The protein is Leucine--tRNA ligase of Paraburkholderia phymatum (strain DSM 17167 / CIP 108236 / LMG 21445 / STM815) (Burkholderia phymatum).